The following is a 327-amino-acid chain: G protein pathway suppressor 2 (327 aa).

Residues 14–109 (MARALHRHIM…RRRKEQSDLT (96 aa)) adopt a coiled-coil conformation. The tract at residues 26 to 65 (RERKRQEEEEVDKMMEQKMKEEQERRKKKEMEERMSLEET) is disordered. Residues lysine 45 and lysine 71 each participate in a glycyl lysine isopeptide (Lys-Gly) (interchain with G-Cter in SUMO1) cross-link. An interaction with SUMO region spans residues 61-94 (SLEETKEQILKLEEKLLALQEEKHQLFLQLKKVL). Disordered regions lie at residues 177-208 (HGQF…SPSQ) and 253-327 (QKQM…FYHK). Polar residues predominate over residues 253–271 (QKQMEHANQQTGFSDSSSL). Asymmetric dimethylarginine is present on arginine 312. Over residues 317-327 (QHSQNPRFYHK) the composition is skewed to polar residues. An Asymmetric dimethylarginine; alternate modification is found at arginine 323. Arginine 323 carries the post-translational modification Omega-N-methylarginine; alternate.

As to quaternary structure, component of the N-Cor repressor complex, at least composed of NCOR1, NCOR2, HDAC3, TBL1X, TBL1R, CORO2A and GPS2. Interacts (when sumoylated at Lys-71) with TBL1X; leading to protect GPS2 from degradation by the proteasome. Interacts with UBE2N; leading to inhibit UBE2N/Ubc13 activity. Interacts with TRAF1. Interacts with TRAF2. Interacts with TRAF6. Interacts with PPARG (when in the liganded conformation). Interacts with (sumoylated) NR1H2; interaction with sumoylated NR1H2 and NR5A2 onto hepatic acute phase protein promoters prevents N-Cor corepressor complex dissociation. Interacts with (sumoylated) NR5A2; interaction with sumoylated NR1H2 and NR5A2 onto hepatic acute phase protein promoters prevents N-Cor corepressor complex dissociation. Interacts with NR1H3. Interacts with RFX4. Interacts with ANKRD26. In terms of assembly, (Microbial infection) Interacts (via coiled coil domain) with hepatitis C virus (HCV) NS5A. Post-translationally, sumoylation regulates its subcellular location. Sumoylation at Lys-45 and Lys-71 regulates the shuttling between the cytoplasm and the nucleus. Sumoylation at Lys-71 is required for interaction with TBL1X. Sumoylated at Lys-45 and Lys-71 in mitochondrion. Desumoylation by SENP1 leads to relocation from the mitochondria to the nucleus. In terms of processing, ubiquitinated at the C-terminus by SIAH2; leading to its degradation by the proteasome. Interaction with TBL1X and methylation at Arg-323 protect GPS2 against ubiquitination and degradation. Methylated at Arg-312 and Arg-323 by PRMT6. Methylation at Arg-323 protects from degradation by the proteasome. In terms of tissue distribution, widely expressed.

It is found in the nucleus. The protein localises to the mitochondrion. Its subcellular location is the cytoplasm. It localises to the cytosol. Key regulator of inflammation, lipid metabolism and mitochondrion homeostasis that acts by inhibiting the activity of the ubiquitin-conjugating enzyme UBE2N/Ubc13, thereby inhibiting 'Lys-63'-linked ubiquitination. In the nucleus, can both acts as a corepressor and coactivator of transcription, depending on the context. Acts as a transcription coactivator in adipocytes by promoting the recruitment of PPARG to promoters: acts by inhibiting the activity of the ubiquitin-conjugating enzyme UBE2N/Ubc13, leading to stabilization of KDM4A and subsequent histone H3 'Lys-9' (H3K9) demethylation. Promotes cholesterol efflux by acting as a transcription coactivator. Acts as a regulator of B-cell development by inhibiting UBE2N/Ubc13, thereby restricting the activation of Toll-like receptors (TLRs) and B-cell antigen receptors (BCRs) signaling pathways. Acts as a key mediator of mitochondrial stress response: in response to mitochondrial depolarization, relocates from the mitochondria to the nucleus following desumoylation and specifically promotes expression of nuclear-encoded mitochondrial genes. Promotes transcription of nuclear-encoded mitochondrial genes by inhibiting UBE2N/Ubc13. Can also act as a corepressor as part of the N-Cor repressor complex by repressing active PPARG. Plays an anti-inflammatory role in macrophages and is required for insulin sensitivity by acting as a corepressor. Plays an anti-inflammatory role during the hepatic acute phase response by interacting with sumoylated NR1H2 and NR5A2 proteins, thereby preventing N-Cor corepressor complex dissociation. In the cytosol, also plays a non-transcriptional role by regulating insulin signaling and pro-inflammatory pathways. In the cytoplasm, acts as a negative regulator of inflammation by inhibiting the pro-inflammatory TNF-alpha pathway; acts by repressing UBE2N/Ubc13 activity. In the cytoplasm of adipocytes, restricts the activation of insulin signaling via inhibition of UBE2N/Ubc13-mediated ubiquitination of AKT. Able to suppress G-protein- and mitogen-activated protein kinase-mediated signal transduction. Acts as a tumor-suppressor in liposarcoma. Its function is as follows. (Microbial infection) Required for efficient replication of hepatitis C virus (HCV) by promoting the interaction between VAPA and HCV virus protein NS5A. The chain is G protein pathway suppressor 2 from Homo sapiens (Human).